The following is a 272-amino-acid chain: MKRRQRLTARSRLRAGIRCHNRFYNAMVQDLASAKRNGVYGERLAPLFSELVPAETLKTALGVSLAFEVNLGQRRPDCVCTVQFGKGSDAKGVCILIELKTCRFSKNMNTASKNLQRKGGMRQLHDSCRLLARTLPPGSGEIVLAPVLVFVAQRGMRVLRVTRLSPQVVYSNAAVLSCTISRLAEYAPPVSAKSTRRRCVAKGTKAKAFSTKAAAEPVPSITPAQPSAAAAVVSLFPAAVPANTTNAAAVHQPVAVSHVNPLAWVASLFSPK.

Belongs to the herpesviridae UL24 family.

Its subcellular location is the virion. The protein resides in the host cytoplasm. The protein localises to the host nucleus. It is found in the host nucleolus. It localises to the host Golgi apparatus. Its function is as follows. May participate in nuclear egress of viral particles. Plays a role in the dispersal of several host nucleolar proteins including NCL/nucleolin and NPM1. Since deletion of host NCL/nucleolin negatively impact on nuclear egress, UL24 supposedly acts on this process through its effect on host nucleoli. This Equine herpesvirus 1 (strain V592) (EHV-1) protein is Protein UL24 homolog.